The primary structure comprises 557 residues: Protein Red (557 aa).

The disordered stretch occupies residues 1–90 (MPERDSEPFS…YAKLRQQEIE (90 aa)). The segment covering 16-25 (DGHDVDDPHS) has biased composition (basic and acidic residues). Positions 42 to 53 (TPRAAPTSAPPS) are enriched in low complexity. K98 and K137 each carry N6-acetyllysine. K151 is covalently cross-linked (Glycyl lysine isopeptide (Lys-Gly) (interchain with G-Cter in SUMO2)). Residues 181 to 205 (KEKEEEELMEKPQKETKKDEDPENK) are disordered. Residue S287 is modified to Phosphoserine. The segment covering 294–303 (RNKKLKKKDK) has biased composition (basic residues). Residues 294–402 (RNKKLKKKDK…PMDVDKGPGS (109 aa)) form a disordered region. Over residues 304–313 (GKLEEKKPPE) the composition is skewed to basic and acidic residues. Glycyl lysine isopeptide (Lys-Gly) (interchain with G-Cter in SUMO2) cross-links involve residues K310 and K331. Residues 332–398 (TPRDKERERY…VDDEPMDVDK (67 aa)) show a composition bias toward basic and acidic residues. Repeat copies occupy residues 342 to 343 (RE), 344 to 345 (RE), 346 to 347 (RD), 348 to 349 (RE), 350 to 351 (RD), 352 to 353 (RD), 354 to 355 (RE), 356 to 357 (RD), 358 to 359 (RE), 360 to 361 (RD), 362 to 363 (RE), 364 to 365 (RE), 366 to 367 (RE), 368 to 369 (RD), 370 to 371 (RE), 372 to 373 (RE), and 374 to 375 (RE). A 17 X 2 AA tandem repeats of R-[ED] region spans residues 342-375 (RERERDRERDRDRERDRERDRERERERDRERERE). Glycyl lysine isopeptide (Lys-Gly) (interchain with G-Cter in SUMO2) cross-links involve residues K386, K388, K404, and K408. S417 and S460 each carry phosphoserine. At T485 the chain carries Phosphothreonine. Glycyl lysine isopeptide (Lys-Gly) (interchain with G-Cter in SUMO2) cross-links involve residues K496, K501, and K509. S536 bears the Phosphoserine mark. Glycyl lysine isopeptide (Lys-Gly) (interchain with G-Cter in SUMO2) cross-links involve residues K541, K543, and K553.

Belongs to the RED family. As to quaternary structure, component of the spliceosome B complex. Interacts with SMU1. Interacts with MAD1L1. May interact with DHX15. Ubiquitous.

It is found in the nucleus. The protein resides in the nucleoplasm. Its subcellular location is the chromosome. It localises to the cytoplasm. The protein localises to the cytoskeleton. It is found in the spindle pole. In terms of biological role, involved in pre-mRNA splicing as a component of the spliceosome. Auxiliary spliceosomal protein that regulates selection of alternative splice sites in a small set of target pre-mRNA species. Required for normal mitotic cell cycle progression. Recruits MAD1L1 and MAD2L1 to kinetochores, and is required to trigger the spindle assembly checkpoint. Required for normal accumulation of SMU1. This Mus musculus (Mouse) protein is Protein Red (Ik).